The chain runs to 214 residues: Pyridoxine/pyridoxamine 5'-phosphate oxidase (214 aa).

Residues 11–14 (RREY) and Lys-68 contribute to the substrate site. FMN-binding positions include 63–68 (RLVLLK), 78–79 (FT), Arg-84, Lys-85, and Gln-107. Positions 125 and 129 each coordinate substrate. FMN contacts are provided by residues 142–143 (QS) and Trp-187. Position 193–195 (193–195 (RLH)) interacts with substrate. Position 197 (Arg-197) interacts with FMN.

This sequence belongs to the pyridoxamine 5'-phosphate oxidase family. Homodimer. FMN serves as cofactor.

It catalyses the reaction pyridoxamine 5'-phosphate + O2 + H2O = pyridoxal 5'-phosphate + H2O2 + NH4(+). The enzyme catalyses pyridoxine 5'-phosphate + O2 = pyridoxal 5'-phosphate + H2O2. Its pathway is cofactor metabolism; pyridoxal 5'-phosphate salvage; pyridoxal 5'-phosphate from pyridoxamine 5'-phosphate: step 1/1. It functions in the pathway cofactor metabolism; pyridoxal 5'-phosphate salvage; pyridoxal 5'-phosphate from pyridoxine 5'-phosphate: step 1/1. In terms of biological role, catalyzes the oxidation of either pyridoxine 5'-phosphate (PNP) or pyridoxamine 5'-phosphate (PMP) into pyridoxal 5'-phosphate (PLP). The protein is Pyridoxine/pyridoxamine 5'-phosphate oxidase of Blochmanniella floridana.